Reading from the N-terminus, the 124-residue chain is V-type proton ATPase subunit F 1 (124 aa).

It belongs to the V-ATPase F subunit family. As to quaternary structure, V-ATPase is a heteromultimeric enzyme made up of two complexes: the ATP-hydrolytic V1 complex and the proton translocation V0 complex. The V1 complex consists of three catalytic AB heterodimers that form a heterohexamer, three peripheral stalks each consisting of EG heterodimers, one central rotor including subunits D and F, and the regulatory subunits C and H. The proton translocation complex V0 consists of the proton transport subunit a, a ring of proteolipid subunits c9c'', rotary subunit d, subunits e and f, and the accessory subunits VhaAC45 and ATP6AP2.

Functionally, subunit of the V1 complex of vacuolar(H+)-ATPase (V-ATPase), a multisubunit enzyme composed of a peripheral complex (V1) that hydrolyzes ATP and a membrane integral complex (V0) that translocates protons. V-ATPase is responsible for acidifying and maintaining the pH of intracellular compartments and in some cell types, is targeted to the plasma membrane, where it is responsible for acidifying the extracellular environment. This Drosophila pseudoobscura pseudoobscura (Fruit fly) protein is V-type proton ATPase subunit F 1 (Vha14).